Here is a 184-residue protein sequence, read N- to C-terminus: Nucleoporin-62 C-terminal-like protein (184 aa).

Residues 117–151 are a coiled coil; sequence RILHGEVNKVKLDQKRLEQELDFILSQQQELEFLL.

This sequence belongs to the nucleoporin NSP1/NUP62 family.

In Homo sapiens (Human), this protein is Nucleoporin-62 C-terminal-like protein (NUP62CL).